The sequence spans 40 residues: MDGETPAQKAARLAAAAAALAAKTAADAAAKAAAIAAAAA.

At M1 the chain carries Blocked amino end (Met).

It belongs to the type-I AFP family.

Its function is as follows. Antifreeze proteins lower the blood freezing point. This chain is Ice-structuring protein GS-8, found in Myoxocephalus aenaeus (Grubby sculpin).